Reading from the N-terminus, the 515-residue chain is Low affinity ammonium transporter (515 aa).

At 1–78 (MSTSSSVTQK…IIGNSFGTTN (78 aa)) the chain is on the extracellular side. The helical transmembrane segment at 79–99 (AGQLSWFASAYSLTVGTFILI) threads the bilayer. Residues 100 to 111 (AGRLGDIFGHKK) are Cytoplasmic-facing. Residues 112 to 132 (FFVLGFFWYALWSLLAGFSVY) traverse the membrane as a helical segment. The Extracellular portion of the chain corresponds to 133-140 (SNQIFFDC). Residues 141 to 161 (CRAFQGMGPAFLLPNAIAILG) form a helical membrane-spanning segment. Residues 162 to 171 (RTYKPGRRKN) lie on the Cytoplasmic side of the membrane. A helical transmembrane segment spans residues 172–192 (MVFSLFGASAPGGFFLGAVFS). Residues 193-202 (SMLGQLAWWP) lie on the Extracellular side of the membrane. A helical membrane pass occupies residues 203 to 223 (WAYWIMGIACFVLAVAGYFVI). The Cytoplasmic portion of the chain corresponds to 224–241 (PHTPMPSRDASSFKLLER). Residues 242–262 (IDFAGSVTGVVGLILFNFAWN) traverse the membrane as a helical segment. At 263–270 (QGPVVGWQ) the chain is on the extracellular side. The chain crosses the membrane as a helical span at residues 271–291 (TPYTYALLIVGTFFLVIFAYI). Over 292–310 (ESRAAFPLLPFAALSSDTA) the chain is Cytoplasmic. A helical transmembrane segment spans residues 311–331 (FVLSCIAAGWASFGIWIFYTW). Residues 332-346 (QFMEDSRGQTPLLSS) are Extracellular-facing. The chain crosses the membrane as a helical span at residues 347-367 (AQFSPVAISGFCAAVTTGFLL). The Cytoplasmic segment spans residues 368–374 (SHTPPST). The chain crosses the membrane as a helical span at residues 375–395 (VMLFAMTAFTVGTILIATAPV). Residues 396–403 (HQTYWAQT) are Extracellular-facing. Residues 404 to 424 (FVSIIVMPWGMDMSFPAATIM) form a helical membrane-spanning segment. At 425 to 435 (LSDSMPHEHQG) the chain is on the cytoplasmic side. Residues 436–456 (LAASLVNTVVNYSISIGLGIA) form a helical membrane-spanning segment. Topologically, residues 457–479 (GTIESRVNDGGAKPLKGYRCSWY) are extracellular. The helical transmembrane segment at 480–500 (MGIGLSGLGIFVAATYAWSTF) threads the bilayer. Topologically, residues 501 to 515 (MKSKKRISEKQHFIE) are cytoplasmic.

It belongs to the major facilitator superfamily.

The protein localises to the cell membrane. Low affinity ammonium transporter of the plasma membrane. May be involved in drug resistance through pumping them out of the cell. This is Low affinity ammonium transporter from Saccharomyces cerevisiae (strain ATCC 204508 / S288c) (Baker's yeast).